Consider the following 488-residue polypeptide: MKFKDLRDFVQQLEQRGELKRIQMPISPVLEMTEICDRTLRAKGPALLFEKPVGFDIPVLGNLFGTPERVAMGMGAEAVSELREIGKLLAFLKEPEPPKGLKDAWSKLPIFRKVIAMAPKVVKDAPCQEIVIEGDDVDLGMLPVQTCWPGDVAPLITWGLTVTKGPNKERQNLGIYRQQVIGRNKIIMRWLSHRGGALDFRDWCAKHPGEPYPVAVALGADPATILGAVTPVPDSLSEYAFAGLLRGSRTELIKCRGSNLQVPASAEIVLEGVIHPGEMADEGPYGDHTGYYNEVDSFPVLTVERITHRIKPIYHSTYTGRPPDEPAILGVALNEVFVPILQKQFPEIVDFYLPPEGCSYRMAVVTIKKQYPGHAKRVMLGVWSFLRQFMYTKFVIVTDDDINARDWNDVIWAITTRMDPKRDTVMIDNTPIDYLDFASPVSGLGSKMGLDVTNKWPGETTREWGRAIVKDEATTRRVDEIWTQLGID.

Residue Asn172 coordinates Mn(2+). Prenylated FMN-binding positions include 175–177, 189–191, and 194–195; these read IYR, RWL, and RG. Glu238 is a Mn(2+) binding site. The active-site Proton donor is Asp287.

The protein belongs to the UbiD family. As to quaternary structure, homohexamer. Prenylated FMN serves as cofactor. Mn(2+) is required as a cofactor.

It localises to the cell membrane. It carries out the reaction a 4-hydroxy-3-(all-trans-polyprenyl)benzoate + H(+) = a 2-(all-trans-polyprenyl)phenol + CO2. The protein operates within cofactor biosynthesis; ubiquinone biosynthesis. Functionally, catalyzes the decarboxylation of 3-octaprenyl-4-hydroxy benzoate to 2-octaprenylphenol, an intermediate step in ubiquinone biosynthesis. The protein is 3-octaprenyl-4-hydroxybenzoate carboxy-lyase of Pseudomonas savastanoi pv. phaseolicola (strain 1448A / Race 6) (Pseudomonas syringae pv. phaseolicola (strain 1448A / Race 6)).